We begin with the raw amino-acid sequence, 420 residues long: UDP-N-acetylglucosamine 1-carboxyvinyltransferase (420 aa).

22-23 (KN) contacts phosphoenolpyruvate. Arg91 contacts UDP-N-acetyl-alpha-D-glucosamine. The active-site Proton donor is Cys115. Position 115 is a 2-(S-cysteinyl)pyruvic acid O-phosphothioketal (Cys115). Residues 120 to 124 (RPVDL), 160 to 163 (KVSV), Asp305, and Ile327 contribute to the UDP-N-acetyl-alpha-D-glucosamine site.

This sequence belongs to the EPSP synthase family. MurA subfamily.

It is found in the cytoplasm. It carries out the reaction phosphoenolpyruvate + UDP-N-acetyl-alpha-D-glucosamine = UDP-N-acetyl-3-O-(1-carboxyvinyl)-alpha-D-glucosamine + phosphate. Its pathway is cell wall biogenesis; peptidoglycan biosynthesis. In terms of biological role, cell wall formation. Adds enolpyruvyl to UDP-N-acetylglucosamine. The protein is UDP-N-acetylglucosamine 1-carboxyvinyltransferase of Pectobacterium atrosepticum (strain SCRI 1043 / ATCC BAA-672) (Erwinia carotovora subsp. atroseptica).